We begin with the raw amino-acid sequence, 60 residues long: MAVISNKNSKSHKRNRRGHIALEVPNIVLDKTTGEYTVAHHVSPKGLYKGRQVVAAPKQK.

It belongs to the bacterial ribosomal protein bL32 family.

The chain is Large ribosomal subunit protein bL32 from Oenococcus oeni (strain ATCC BAA-331 / PSU-1).